A 362-amino-acid polypeptide reads, in one-letter code: 3-isopropylmalate dehydrogenase (362 aa).

78–91 contacts NAD(+); sequence GPQWDTLPSDKRPE. Residues Arg-98, Arg-108, Arg-136, and Asp-226 each coordinate substrate. Mg(2+) contacts are provided by Asp-226, Asp-250, and Asp-254. 284–296 lines the NAD(+) pocket; the sequence is GSAPDIAGQDKAN.

This sequence belongs to the isocitrate and isopropylmalate dehydrogenases family. LeuB type 1 subfamily. Homodimer. The cofactor is Mg(2+). Mn(2+) is required as a cofactor.

It localises to the cytoplasm. It carries out the reaction (2R,3S)-3-isopropylmalate + NAD(+) = 4-methyl-2-oxopentanoate + CO2 + NADH. It functions in the pathway amino-acid biosynthesis; L-leucine biosynthesis; L-leucine from 3-methyl-2-oxobutanoate: step 3/4. Functionally, catalyzes the oxidation of 3-carboxy-2-hydroxy-4-methylpentanoate (3-isopropylmalate) to 3-carboxy-4-methyl-2-oxopentanoate. The product decarboxylates to 4-methyl-2 oxopentanoate. The chain is 3-isopropylmalate dehydrogenase from Gloeobacter violaceus (strain ATCC 29082 / PCC 7421).